The chain runs to 242 residues: Probable transcriptional regulatory protein XCC3027 (242 aa).

Belongs to the TACO1 family.

The protein resides in the cytoplasm. The sequence is that of Probable transcriptional regulatory protein XCC3027 from Xanthomonas campestris pv. campestris (strain ATCC 33913 / DSM 3586 / NCPPB 528 / LMG 568 / P 25).